Consider the following 124-residue polypeptide: Cytochrome b5-like protein (124 aa).

A helical transmembrane segment spans residues 5-22 (YLLILIIIYVIKIICRYF). One can recognise a Cytochrome b5 heme-binding domain in the interval 49–124 (NQINQVNQVN…ILSKYKITEK (76 aa)). The heme site is built by His84 and His108.

It belongs to the cytochrome b5 family.

Its subcellular location is the membrane. In terms of biological role, membrane bound hemoprotein which function as an electron carrier for several membrane bound oxygenases. The polypeptide is Cytochrome b5-like protein (Acanthamoeba polyphaga (Amoeba)).